The chain runs to 247 residues: Acetoacetate decarboxylase 1 (247 aa).

The Schiff-base intermediate with acetoacetate role is filled by K116.

It belongs to the ADC family.

The enzyme catalyses acetoacetate + H(+) = acetone + CO2. In terms of biological role, catalyzes the conversion of acetoacetate to acetone and carbon dioxide. The polypeptide is Acetoacetate decarboxylase 1 (Mesorhizobium japonicum (strain LMG 29417 / CECT 9101 / MAFF 303099) (Mesorhizobium loti (strain MAFF 303099))).